A 471-amino-acid polypeptide reads, in one-letter code: 6-phosphofructo-2-kinase/fructose-2,6-bisphosphatase 1 (471 aa).

Position 2 is an N-acetylserine (serine 2). A 6-phosphofructo-2-kinase region spans residues 2-250 (SPEMGELTQT…VYYLMNIHVT (249 aa)). Serine 33 carries the post-translational modification Phosphoserine; by PKA. 49-57 (GLPARGKTY) lines the ATP pocket. Beta-D-fructose 6-phosphate contacts are provided by arginine 82 and arginine 105. Aspartate 131 is a catalytic residue. Positions 133 and 139 each coordinate beta-D-fructose 6-phosphate. Serine 141 carries the post-translational modification Phosphoserine. Cysteine 161 is an active-site residue. ATP is bound at residue 170-175 (NIRQVK). Beta-D-fructose 6-phosphate is bound by residues lysine 175, arginine 196, and tyrosine 200. A fructose-2,6-bisphosphatase region spans residues 251-471 (PRSIYLCRHG…EALDTVPAHY (221 aa)). Arginine 258 provides a ligand contact to beta-D-fructose 2,6-bisphosphate. Histidine 259 (tele-phosphohistidine intermediate) is an active-site residue. Asparagine 265, glycine 271, and arginine 308 together coordinate beta-D-fructose 2,6-bisphosphate. Glutamate 328 functions as the Proton donor/acceptor in the catalytic mechanism. Beta-D-fructose 2,6-bisphosphate is bound by residues tyrosine 339, arginine 353, lysine 357, tyrosine 368, glutamine 394, and arginine 398. 350–353 (FALR) provides a ligand contact to ATP. ATP-binding positions include 394–398 (QAVMR) and tyrosine 430.

This sequence in the C-terminal section; belongs to the phosphoglycerate mutase family. Homodimer. Liver.

It carries out the reaction beta-D-fructose 2,6-bisphosphate + H2O = beta-D-fructose 6-phosphate + phosphate. It catalyses the reaction beta-D-fructose 6-phosphate + ATP = beta-D-fructose 2,6-bisphosphate + ADP + H(+). Phosphorylation at Ser-33 inhibits the kinase and activates the bisphosphatase. Synthesis and degradation of fructose 2,6-bisphosphate. This chain is 6-phosphofructo-2-kinase/fructose-2,6-bisphosphatase 1, found in Homo sapiens (Human).